The chain runs to 104 residues: Large ribosomal subunit protein bL21 (104 aa).

This sequence belongs to the bacterial ribosomal protein bL21 family. As to quaternary structure, part of the 50S ribosomal subunit. Contacts protein L20.

This protein binds to 23S rRNA in the presence of protein L20. This chain is Large ribosomal subunit protein bL21, found in Thermotoga sp. (strain RQ2).